A 110-amino-acid polypeptide reads, in one-letter code: U1-lycotoxin-Ls1cc (110 aa).

An N-terminal signal peptide occupies residues 1–20 (MKFVLLFGVLLVTLFSYSSA). The propeptide occupies 21–44 (EMLDDFDQADEDELLSLIEKEEAR). Disulfide bonds link cysteine 47/cysteine 62, cysteine 54/cysteine 71, cysteine 61/cysteine 89, and cysteine 73/cysteine 87.

The protein belongs to the neurotoxin 19 (CSTX) family. 03 subfamily. In terms of tissue distribution, expressed by the venom gland.

It is found in the secreted. This Lycosa singoriensis (Wolf spider) protein is U1-lycotoxin-Ls1cc.